The sequence spans 309 residues: Ankyrin repeat protein VACWR203 (309 aa).

5 ANK repeats span residues 13–44 (SVFKGFSDKVRKNDLDMNVVKELLSNGASLTI), 110–142 (KYGTPLHILASNKKLITPNYMKLLVYNGNDINA), 160–189 (FVYHNIEYGIRYYNEKIIDAFIELGADLTI), 197–231 (PVVYCIHSNAEYGYNNITNIKIIRKLLNLSRRASH), and 269–298 (EGRTPLHCAIQHNFTQIAKYLLDRGADIVV).

The protein belongs to the orthopoxviruses VACWR203 protein family.

The sequence is that of Ankyrin repeat protein VACWR203 from Bos taurus (Bovine).